Here is a 400-residue protein sequence, read N- to C-terminus: Argininosuccinate synthase (400 aa).

ATP is bound by residues 10-18 and alanine 38; that span reads AYSGGVDTS. Tyrosine 89 contacts L-citrulline. Glycine 119 is a binding site for ATP. L-aspartate contacts are provided by threonine 121, asparagine 125, and aspartate 126. Asparagine 125 serves as a coordination point for L-citrulline. L-citrulline contacts are provided by arginine 129, serine 177, glutamate 262, and tyrosine 274.

This sequence belongs to the argininosuccinate synthase family. Type 1 subfamily. Homotetramer.

Its subcellular location is the cytoplasm. It carries out the reaction L-citrulline + L-aspartate + ATP = 2-(N(omega)-L-arginino)succinate + AMP + diphosphate + H(+). Its pathway is amino-acid biosynthesis; L-arginine biosynthesis; L-arginine from L-ornithine and carbamoyl phosphate: step 2/3. The protein is Argininosuccinate synthase of Trichodesmium erythraeum (strain IMS101).